The following is a 558-amino-acid chain: Glucose-6-phosphate isomerase (558 aa).

Ala2 is subject to N-acetylalanine. An N6-acetyllysine modification is found at Lys12. Residues Ser86 and Ser107 each carry the phosphoserine modification. Lys142 is subject to N6-acetyllysine. 159–160 (GS) provides a ligand contact to D-glucose 6-phosphate. Residue Ser185 is modified to Phosphoserine; by CK2. A D-glucose 6-phosphate-binding site is contributed by 210-215 (SKTFTT). Position 250 is a phosphothreonine (Thr250). Residues Gln354, Glu358, and His389 each contribute to the D-glucose 6-phosphate site. Catalysis depends on Glu358, which acts as the Proton donor. His389 is a catalytic residue. Lys454 bears the N6-acetyllysine; alternate mark. Lys454 carries the N6-malonyllysine; alternate modification. Lys454 is modified (N6-succinyllysine; alternate). A Phosphoserine modification is found at Ser455. A D-glucose 6-phosphate-binding site is contributed by Lys519. The active site involves Lys519.

It belongs to the GPI family. Homodimer; in the catalytically active form. Monomer in the secreted form. Phosphorylation at Ser-185 by CK2 has been shown to decrease enzymatic activity and may contribute to secretion by a non-classical secretory pathway. Post-translationally, ISGylated.

Its subcellular location is the cytoplasm. It localises to the secreted. It catalyses the reaction alpha-D-glucose 6-phosphate = beta-D-fructose 6-phosphate. It functions in the pathway carbohydrate degradation; glycolysis; D-glyceraldehyde 3-phosphate and glycerone phosphate from D-glucose: step 2/4. In the cytoplasm, catalyzes the conversion of glucose-6-phosphate to fructose-6-phosphate, the second step in glycolysis, and the reverse reaction during gluconeogenesis. Besides it's role as a glycolytic enzyme, also acts as a secreted cytokine: acts as an angiogenic factor (AMF) that stimulates endothelial cell motility. Acts as a neurotrophic factor, neuroleukin, for spinal and sensory neurons. It is secreted by lectin-stimulated T-cells and induces immunoglobulin secretion. The protein is Glucose-6-phosphate isomerase of Rattus norvegicus (Rat).